We begin with the raw amino-acid sequence, 125 residues long: MAKYLAQIVVMGMQVVGRAFTRALRQEFAASKVAAEARGRAGTESAAVSSLSGISLQEAQQILNVSKLTPEEIQKNYEHLFKVNDKGLGGSFYLQSKVVRAKERLDQEMEIQSKTHKPKEETTQT.

Positions 58–110 are J-like; sequence EAQQILNVSKLTPEEIQKNYEHLFKVNDKGLGGSFYLQSKVVRAKERLDQEME.

Belongs to the TIM16/PAM16 family. As to quaternary structure, probable component of the PAM complex at least composed of 1 mitochondrial HSP70 protein, 1 GRPE, 1 TIMM44, 1 TIMM16/PAM16 and 1 TIMM14. Associates with the TIM23 complex.

It localises to the mitochondrion inner membrane. Its function is as follows. Regulates ATP-dependent protein translocation into the mitochondrial matrix. The chain is Mitochondrial import inner membrane translocase subunit tim16-A (pam16-a) from Xenopus laevis (African clawed frog).